We begin with the raw amino-acid sequence, 405 residues long: MPDKTSYIFSNARIATLGENAEGLGLIDNAVLAVKDGKIAYVGPENALPAEYASFEKIDCENRLITPGLVDCHTHLVHAGNRAHEFELRLNGATYEEVARAGGGIVSSVKNLRAASEDDLVRETLPRLDALIAEGVTTVEVKSGYGLDRDSEIKSLKAARRLGEERDVTVRTTFLGAHALPPEMNGDKAAYIDRVINDMLPAIAAENLADAVDGFCEGIAFLPDEIARVFDAAKAHNIPVKLHADQLSNLHGAALAASYDALSADHLEYTDADGATAMAKAGTVAVLLPGAYYFIRETQKPPVELFRAAGTKMALATDNNPGTSPLTSLLLTMNMGATLFRMTVDECIAGVTREAARALGLLDQTGTLEIGKDADLAIWDVERPAELVYRIGFNPLWKRVFKGQI.

His73 and His75 together coordinate Fe(3+). Positions 73 and 75 each coordinate Zn(2+). 4-imidazolone-5-propanoate-binding residues include Arg82, Tyr145, and His178. Tyr145 is an N-formimidoyl-L-glutamate binding site. His243 contacts Fe(3+). His243 is a binding site for Zn(2+). Gln246 serves as a coordination point for 4-imidazolone-5-propanoate. Asp318 provides a ligand contact to Fe(3+). Zn(2+) is bound at residue Asp318. Residues Asn320 and Gly322 each contribute to the N-formimidoyl-L-glutamate site. Thr323 is a binding site for 4-imidazolone-5-propanoate.

Belongs to the metallo-dependent hydrolases superfamily. HutI family. It depends on Zn(2+) as a cofactor. Requires Fe(3+) as cofactor.

Its subcellular location is the cytoplasm. It catalyses the reaction 4-imidazolone-5-propanoate + H2O = N-formimidoyl-L-glutamate. The protein operates within amino-acid degradation; L-histidine degradation into L-glutamate; N-formimidoyl-L-glutamate from L-histidine: step 3/3. In terms of biological role, catalyzes the hydrolytic cleavage of the carbon-nitrogen bond in imidazolone-5-propanoate to yield N-formimidoyl-L-glutamate. It is the third step in the universal histidine degradation pathway. The polypeptide is Imidazolonepropionase (Brucella anthropi (strain ATCC 49188 / DSM 6882 / CCUG 24695 / JCM 21032 / LMG 3331 / NBRC 15819 / NCTC 12168 / Alc 37) (Ochrobactrum anthropi)).